A 30-amino-acid polypeptide reads, in one-letter code: Thaumatin-like protein (30 aa).

Belongs to the thaumatin family.

It is found in the secreted. Its function is as follows. Has antifungal activity against C.comatus, F.oxysporum and P.ostreatus. The protein is Thaumatin-like protein of Phaseolus vulgaris (Kidney bean).